The primary structure comprises 305 residues: tRNA pseudouridine synthase B (305 aa).

The Nucleophile role is filled by Asp-39.

Belongs to the pseudouridine synthase TruB family. Type 1 subfamily.

The enzyme catalyses uridine(55) in tRNA = pseudouridine(55) in tRNA. Functionally, responsible for synthesis of pseudouridine from uracil-55 in the psi GC loop of transfer RNAs. This is tRNA pseudouridine synthase B from Staphylococcus aureus (strain MSSA476).